Here is an 831-residue protein sequence, read N- to C-terminus: Protein translocase subunit SecA (831 aa).

Residues Gln88, 106–110 (GEGKT), and Asp495 each bind ATP. Positions 816, 818, 827, and 828 each coordinate Zn(2+).

This sequence belongs to the SecA family. Monomer and homodimer. Part of the essential Sec protein translocation apparatus which comprises SecA, SecYEG and auxiliary proteins SecDF-YajC and YidC. Zn(2+) serves as cofactor.

It is found in the cell membrane. Its subcellular location is the cytoplasm. It catalyses the reaction ATP + H2O + cellular proteinSide 1 = ADP + phosphate + cellular proteinSide 2.. Part of the Sec protein translocase complex. Interacts with the SecYEG preprotein conducting channel. Has a central role in coupling the hydrolysis of ATP to the transfer of proteins into and across the cell membrane, serving as an ATP-driven molecular motor driving the stepwise translocation of polypeptide chains across the membrane. This chain is Protein translocase subunit SecA, found in Lawsonia intracellularis (strain PHE/MN1-00).